The primary structure comprises 753 residues: Elongin-A2 (753 aa).

The TFIIS N-terminal domain occupies 5–80 (STTLHAVEKL…ARWKKLVLVD (76 aa)). Disordered regions lie at residues 80 to 245 (DRNT…DWHS), 261 to 453 (ETPR…GPKT), and 477 to 497 (LSDS…SPKF). Basic and acidic residues-rich tracts occupy residues 147–157 (HSREPRAERKC) and 271–285 (ARDR…DKEG). Over residues 306–317 (KRPQHSHSNKKR) the composition is skewed to basic residues. Over residues 333 to 348 (SPEEKEQLSNDRETQE) the composition is skewed to basic and acidic residues. Residues 366–377 (EVEEVDMAEEFE) are compositionally biased toward acidic residues. Residues 409 to 428 (DKQRKANESKGTRESWDSAK) show a composition bias toward basic and acidic residues. The segment at 500-659 (EAAFPGRRVN…TPYDTSRRQE (160 aa)) is activation domain. The BC-box stretch occupies residues 528–537 (TLRQQCAQVL). An interacting with Elongin BC complex region spans residues 528–537 (TLRQQCAQVL). The tract at residues 650-735 (TPYDTSRRQE…KTRKQAAKKV (86 aa)) is disordered. The segment covering 654–663 (TSRRQEKSAG) has biased composition (basic and acidic residues). Low complexity predominate over residues 680–700 (GSSHTPSSQSSSGGGRDSSSS).

In terms of assembly, heterotrimer of an A (ELOA, ELOA2 or ELOA3P), ELOB and ELOC subunit. As to expression, specifically expressed in testis.

The protein resides in the nucleus. SIII, also known as elongin, is a general transcription elongation factor that increases the RNA polymerase II transcription elongation past template-encoded arresting sites. Subunit A2 is transcriptionally active but its transcription activity is not enhanced by binding to the dimeric complex of the SIII regulatory subunits B and C (elongin BC complex). This is Elongin-A2 from Homo sapiens (Human).